We begin with the raw amino-acid sequence, 398 residues long: Acetylornithine aminotransferase (398 aa).

Pyridoxal 5'-phosphate-binding positions include 105–106 (GA) and Phe138. Arg141 lines the N(2)-acetyl-L-ornithine pocket. 223–226 (DEVQ) serves as a coordination point for pyridoxal 5'-phosphate. Lys252 is subject to N6-(pyridoxal phosphate)lysine. Thr280 lines the N(2)-acetyl-L-ornithine pocket. A pyridoxal 5'-phosphate-binding site is contributed by Thr281.

The protein belongs to the class-III pyridoxal-phosphate-dependent aminotransferase family. ArgD subfamily. As to quaternary structure, homodimer. Requires pyridoxal 5'-phosphate as cofactor.

The protein resides in the cytoplasm. The catalysed reaction is N(2)-acetyl-L-ornithine + 2-oxoglutarate = N-acetyl-L-glutamate 5-semialdehyde + L-glutamate. Its pathway is amino-acid biosynthesis; L-arginine biosynthesis; N(2)-acetyl-L-ornithine from L-glutamate: step 4/4. The protein is Acetylornithine aminotransferase of Methanocaldococcus jannaschii (strain ATCC 43067 / DSM 2661 / JAL-1 / JCM 10045 / NBRC 100440) (Methanococcus jannaschii).